We begin with the raw amino-acid sequence, 270 residues long: Energy-coupling factor transporter transmembrane protein EcfT (270 aa).

Transmembrane regions (helical) follow at residues 36-56, 72-92, 108-128, and 248-268; these read LFIV…LISI, PIFI…GGAN, LIMA…TSLL, and FIAS…RIWW.

Belongs to the energy-coupling factor EcfT family. Forms a stable energy-coupling factor (ECF) transporter complex composed of 2 membrane-embedded substrate-binding proteins (S component), 2 ATP-binding proteins (A component) and 2 transmembrane proteins (T component). May be able to interact with more than 1 S component at a time.

It is found in the cell membrane. Functionally, transmembrane (T) component of an energy-coupling factor (ECF) ABC-transporter complex. Unlike classic ABC transporters this ECF transporter provides the energy necessary to transport a number of different substrates. This Clostridium kluyveri (strain ATCC 8527 / DSM 555 / NBRC 12016 / NCIMB 10680 / K1) protein is Energy-coupling factor transporter transmembrane protein EcfT.